A 178-amino-acid polypeptide reads, in one-letter code: MSRIGNKVIVLPAGVELANNDNVVTVKGPKGELTREFSKDIEIRVEGTEITXHRPNDSKEMKTIHGTTRALLNNMVVGVSEGFKKELEMRGVGYRAQLQGSKLVLAVGKSHPDEVEAPEGITFELPNPTTIVVSGISKEVVGQTAAYVRSLRSPEPYKGKGIRYVGEFVRRKEGKTGK.

This sequence belongs to the universal ribosomal protein uL6 family. As to quaternary structure, part of the 50S ribosomal subunit.

In terms of biological role, this protein binds to the 23S rRNA, and is important in its secondary structure. It is located near the subunit interface in the base of the L7/L12 stalk, and near the tRNA binding site of the peptidyltransferase center. This chain is Large ribosomal subunit protein uL6, found in Streptococcus pneumoniae serotype 19F (strain G54).